The sequence spans 166 residues: Disulfide bond formation protein B (166 aa).

Over 1–11 (MIALPRNRRPL) the chain is Cytoplasmic. Residues 12–28 (FLAVFAYCAALLAFGLY) form a helical membrane-spanning segment. Over 29 to 46 (LQHYQGIEPCPMCIMQRY) the chain is Periplasmic. Residues C38 and C41 are joined by a disulfide bond. The helical transmembrane segment at 47–63 (AFALVGVIALVAGLHGP) threads the bilayer. Topologically, residues 64–70 (RGAGVRV) are cytoplasmic. Residues 71-87 (YGGLLLLTALAGGSVAA) form a helical membrane-spanning segment. The Periplasmic segment spans residues 88-143 (RQTWMQLYPPEIPECGPGLEYMLESFPLTSALPMIFRGAGDCSAIDWTFLGLSLAN). C102 and C129 are oxidised to a cystine. Residues 144-162 (WSLLNFGAAALLALWLLFG) form a helical membrane-spanning segment. Topologically, residues 163–166 (RRVR) are cytoplasmic.

The protein belongs to the DsbB family.

The protein resides in the cell inner membrane. Its function is as follows. Required for disulfide bond formation in some periplasmic proteins. Acts by oxidizing the DsbA protein. The chain is Disulfide bond formation protein B from Azoarcus sp. (strain BH72).